Reading from the N-terminus, the 121-residue chain is MSITKDQMLEAFAAMSVMEVVELIEAMEEKFGVSAAAAVVSGGGDAVAAEEQTEFDVVLTSFGENKVAVIKALRSATGLGLKEAKTMAESSPIAVKEAVSKEEAATLKADLEAAGASVEVK.

This sequence belongs to the bacterial ribosomal protein bL12 family. In terms of assembly, homodimer. Part of the ribosomal stalk of the 50S ribosomal subunit. Forms a multimeric L10(L12)X complex, where L10 forms an elongated spine to which 2 to 4 L12 dimers bind in a sequential fashion. Binds GTP-bound translation factors.

Functionally, forms part of the ribosomal stalk which helps the ribosome interact with GTP-bound translation factors. Is thus essential for accurate translation. This Shewanella frigidimarina (strain NCIMB 400) protein is Large ribosomal subunit protein bL12.